We begin with the raw amino-acid sequence, 279 residues long: Large ribosomal subunit protein uL2 (279 aa).

The segment at 223 to 279 (VAMNPIDHPHGGGEGRTSGGRHPVTPWGKGTKGTRTRSNKSTDKYILRSRHAKKKGR) is disordered. Positions 269-279 (LRSRHAKKKGR) are enriched in basic residues.

This sequence belongs to the universal ribosomal protein uL2 family. Part of the 50S ribosomal subunit. Forms a bridge to the 30S subunit in the 70S ribosome.

Its function is as follows. One of the primary rRNA binding proteins. Required for association of the 30S and 50S subunits to form the 70S ribosome, for tRNA binding and peptide bond formation. It has been suggested to have peptidyltransferase activity; this is somewhat controversial. Makes several contacts with the 16S rRNA in the 70S ribosome. In Paracoccus denitrificans (strain Pd 1222), this protein is Large ribosomal subunit protein uL2.